The sequence spans 475 residues: Trigger factor (475 aa).

In terms of domain architecture, PPIase FKBP-type spans 165-250; it reads GDRVTIDYLG…VKAVFRPDEL (86 aa). Residues 439–466 are compositionally biased toward basic and acidic residues; the sequence is EYDETDVPEEKPAKKKSAVKEKSAEKTS. Residues 439–475 form a disordered region; the sequence is EYDETDVPEEKPAKKKSAVKEKSAEKTSAKKKAPKKA.

Belongs to the FKBP-type PPIase family. Tig subfamily.

It is found in the cytoplasm. The enzyme catalyses [protein]-peptidylproline (omega=180) = [protein]-peptidylproline (omega=0). Involved in protein export. Acts as a chaperone by maintaining the newly synthesized protein in an open conformation. Functions as a peptidyl-prolyl cis-trans isomerase. In Bartonella tribocorum (strain CIP 105476 / IBS 506), this protein is Trigger factor.